Reading from the N-terminus, the 602-residue chain is Sodium- and chloride-dependent GABA transporter 2 (602 aa).

Residues 1–13 (MDSRVSGTTSNGE) are compositionally biased toward polar residues. Residues 1–22 (MDSRVSGTTSNGETKPVYPVME) form a disordered region. The Cytoplasmic portion of the chain corresponds to 1–40 (MDSRVSGTTSNGETKPVYPVMEKKEEDGTLERGHWNNKME). Helical transmembrane passes span 41-61 (FVLS…FPYL), 68-88 (GAFF…VFLL), and 121-141 (IVIL…FYLF). Residues 142-206 (SSFTIDLPWG…GIQHLGALRW (65 aa)) are Extracellular-facing. A disulfide bridge links C153 with C162. An N-linked (GlcNAc...) asparagine glycan is attached at N173. Helical transmembrane passes span 207–227 (ELAL…WKGV) and 233–253 (VVYF…IRGV). N-linked (GlcNAc...) asparagine glycosylation occurs at N269. Helical transmembrane passes span 282-302 (AGTQ…ALGS), 319-339 (FLNS…LGFM), 366-386 (VVML…VVLL), 418-438 (VLIL…LTEG), 453-473 (GMCL…VYGA), 490-510 (PLIK…TFLF), and 528-548 (WWGD…IPAW). Over 549-602 (SLYRLGTLKGPFRERIRQLMCPAEDLPQRNPAGPSAPATPRTSLLRLTELESHC) the chain is Cytoplasmic. Phosphothreonine is present on T587. S591 carries the phosphoserine modification.

This sequence belongs to the sodium:neurotransmitter symporter (SNF) (TC 2.A.22) family. SLC6A13 subfamily. As to expression, expressed in brain, kidney, lung, liver and testis.

Its subcellular location is the cell membrane. The protein localises to the basolateral cell membrane. It carries out the reaction 4-aminobutanoate(out) + chloride(out) + 2 Na(+)(out) = 4-aminobutanoate(in) + chloride(in) + 2 Na(+)(in). It catalyses the reaction taurine(out) + chloride(out) + 2 Na(+)(out) = taurine(in) + chloride(in) + 2 Na(+)(in). The enzyme catalyses beta-alanine(out) + chloride(out) + 2 Na(+)(out) = beta-alanine(in) + chloride(in) + 2 Na(+)(in). The catalysed reaction is hypotaurine(out) + chloride(out) + 2 Na(+)(out) = hypotaurine(in) + chloride(in) + 2 Na(+)(in). GABA transport is inhibited by beta-alanine, 2,3-diaminopropionic acid and SNAP-5114. Its function is as follows. Mediates sodium- and chloride-dependent transport of gamma-aminobutyric acid (GABA). Mediates transport of beta-alanine. Can also mediate transport of taurine and hypotaurine. This Homo sapiens (Human) protein is Sodium- and chloride-dependent GABA transporter 2 (SLC6A13).